The chain runs to 132 residues: Protein NrdI (132 aa).

The protein belongs to the NrdI family.

Probably involved in ribonucleotide reductase function. The sequence is that of Protein NrdI from Staphylococcus haemolyticus (strain JCSC1435).